The chain runs to 238 residues: Probable transcriptional regulatory protein TC_0742 (238 aa).

The tract at residues 1 to 21 (MAGHSKWANTKHRKERADHKK) is disordered. A compositionally biased stretch (basic residues) spans 9-21 (NTKHRKERADHKK).

Belongs to the TACO1 family.

It is found in the cytoplasm. The polypeptide is Probable transcriptional regulatory protein TC_0742 (Chlamydia muridarum (strain MoPn / Nigg)).